The sequence spans 728 residues: Catalase-peroxidase (728 aa).

The segment at residues 91–218 (WHSAGTYRTA…LAAVQMGLIY (128 aa)) is a cross-link (tryptophyl-tyrosyl-methioninium (Trp-Tyr) (with M-244)). The Proton acceptor role is filled by His-92. The tryptophyl-tyrosyl-methioninium (Tyr-Met) (with W-91) cross-link spans 218–244 (YVNPEGPDGNPDPVAAARDIRDTFARM). His-259 contacts heme b.

Belongs to the peroxidase family. Peroxidase/catalase subfamily. In terms of assembly, homodimer or homotetramer. The cofactor is heme b. In terms of processing, formation of the three residue Trp-Tyr-Met cross-link is important for the catalase, but not the peroxidase activity of the enzyme.

It carries out the reaction H2O2 + AH2 = A + 2 H2O. The catalysed reaction is 2 H2O2 = O2 + 2 H2O. Its function is as follows. Bifunctional enzyme with both catalase and broad-spectrum peroxidase activity. The sequence is that of Catalase-peroxidase from Burkholderia thailandensis (strain ATCC 700388 / DSM 13276 / CCUG 48851 / CIP 106301 / E264).